Here is a 177-residue protein sequence, read N- to C-terminus: MDLPAPIHDILLVSLGSGLIVGGLGVVLLTNPIYSAFSSGLVLVCISLFYIPSNSYFVAAAQLLIYVGAINVLILFAVMFMNGSEYYNSFHFWTIGDGFTSVVCTSIFFSLIATIPNTSWYGIIWTTRSNQIIEQDLTSNVQQIGIHLSTDFYLPFELISIILLVSLVGAIAMARRE.

5 consecutive transmembrane segments (helical) span residues 10-30, 32-52, 61-81, 92-112, and 152-172; these read ILLV…VLLT, PIYS…FYIP, AQLL…VMFM, FWTI…FSLI, and FYLP…GAIA.

Belongs to the complex I subunit 6 family. NDH is composed of at least 16 different subunits, 5 of which are encoded in the nucleus.

It localises to the plastid. Its subcellular location is the chloroplast thylakoid membrane. It carries out the reaction a plastoquinone + NADH + (n+1) H(+)(in) = a plastoquinol + NAD(+) + n H(+)(out). The enzyme catalyses a plastoquinone + NADPH + (n+1) H(+)(in) = a plastoquinol + NADP(+) + n H(+)(out). Functionally, NDH shuttles electrons from NAD(P)H:plastoquinone, via FMN and iron-sulfur (Fe-S) centers, to quinones in the photosynthetic chain and possibly in a chloroplast respiratory chain. The immediate electron acceptor for the enzyme in this species is believed to be plastoquinone. Couples the redox reaction to proton translocation, and thus conserves the redox energy in a proton gradient. The protein is NAD(P)H-quinone oxidoreductase subunit 6, chloroplastic (ndhG) of Nuphar advena (Common spatterdock).